The sequence spans 61 residues: uncharacterized protein (61 aa).

It localises to the mitochondrion. This is an uncharacterized protein from Marchantia polymorpha (Common liverwort).